Reading from the N-terminus, the 345-residue chain is UDP-N-acetylenolpyruvoylglucosamine reductase (345 aa).

One can recognise an FAD-binding PCMH-type domain in the interval 16 to 186 (LSVSASCIKV…TAVGIFLKKE (171 aa)). Arg162 is a catalytic residue. The Proton donor role is filled by Ser232. Residue Glu328 is part of the active site.

The protein belongs to the MurB family. Requires FAD as cofactor.

The protein localises to the cytoplasm. It carries out the reaction UDP-N-acetyl-alpha-D-muramate + NADP(+) = UDP-N-acetyl-3-O-(1-carboxyvinyl)-alpha-D-glucosamine + NADPH + H(+). Its pathway is cell wall biogenesis; peptidoglycan biosynthesis. Cell wall formation. The protein is UDP-N-acetylenolpyruvoylglucosamine reductase of Pectobacterium atrosepticum (strain SCRI 1043 / ATCC BAA-672) (Erwinia carotovora subsp. atroseptica).